The sequence spans 372 residues: Nickel transporter NicT (372 aa).

Transmembrane regions (helical) follow at residues 30 to 50, 55 to 75, 104 to 124, 152 to 172, 218 to 238, 245 to 265, 294 to 314, and 335 to 355; these read LMFA…TLLV, LSLG…TLGL, VGFF…VMLV, ISGA…VGIV, VGFL…LVLA, GLPW…MCLL, VTGL…LGLI, and TVGF…LLVW.

Belongs to the NiCoT transporter (TC 2.A.52) family.

Its subcellular location is the cell membrane. It carries out the reaction Ni(2+)(in) = Ni(2+)(out). Export of the fluoroquinolone antibiotic norfloxacin is inhibited by the proton ionophore carbonyl cyanide m-chlorophenylhydrazone (CCCP). Nickel may influence the extrusion of antibiotics possibly by facilitating the proton motive force-dependent efflux process. In terms of biological role, involved in nickel uptake. In addition, acts as a drug efflux pump and contributes to moderate tolerance towards different classes of antibiotics, including fluoroquinolones, aminoglycosides and the anti-TB drug isoniazid, with a preference for fluoroquinolones. The drug efflux function is probably dependent on proton motive force (pmf) or ion gradient, and might be facilitated by the presence of Ni(2+) ions. The protein is Nickel transporter NicT of Mycobacterium tuberculosis (strain ATCC 25618 / H37Rv).